The sequence spans 148 residues: Transcriptional regulator MraZ (148 aa).

2 consecutive SpoVT-AbrB domains span residues 7–56 (KERH…EPDI) and 85–128 (LDVV…APER).

Belongs to the MraZ family. In terms of assembly, forms oligomers.

Its subcellular location is the cytoplasm. It is found in the nucleoid. The chain is Transcriptional regulator MraZ from Chlorobium phaeobacteroides (strain DSM 266 / SMG 266 / 2430).